The primary structure comprises 428 residues: Tyrosine--tRNA ligase (428 aa).

An L-tyrosine-binding site is contributed by Tyr41. The 'HIGH' region signature appears at 46–55 (PTADSLHLGH). L-tyrosine-binding residues include Tyr179 and Gln183. A 'KMSKS' region motif is present at residues 239–243 (KFGKT). Lys242 serves as a coordination point for ATP. The region spanning 361–418 (ADLMQALVDAELQPSRGQARKTIASNAVTINGEKQSDPEYIFNDEDRLFGRYTLLRRG) is the S4 RNA-binding domain.

The protein belongs to the class-I aminoacyl-tRNA synthetase family. TyrS type 1 subfamily. As to quaternary structure, homodimer.

Its subcellular location is the cytoplasm. The enzyme catalyses tRNA(Tyr) + L-tyrosine + ATP = L-tyrosyl-tRNA(Tyr) + AMP + diphosphate + H(+). Catalyzes the attachment of tyrosine to tRNA(Tyr) in a two-step reaction: tyrosine is first activated by ATP to form Tyr-AMP and then transferred to the acceptor end of tRNA(Tyr). The sequence is that of Tyrosine--tRNA ligase from Salmonella paratyphi C (strain RKS4594).